We begin with the raw amino-acid sequence, 342 residues long: MATH domain and coiled-coil domain-containing protein At3g44800 (342 aa).

Residues 3–129 (YEKFTWVIKN…NNEVKIVAEV (127 aa)) form the MATH domain. Residues 253-327 (KVDWLERKLE…ALLEKEKGKV (75 aa)) adopt a coiled-coil conformation.

The polypeptide is MATH domain and coiled-coil domain-containing protein At3g44800 (Arabidopsis thaliana (Mouse-ear cress)).